We begin with the raw amino-acid sequence, 835 residues long: MRRRNDPECTAPIKKQKKRVAELALNLSAASGDEPPSSVNHAAKASTTSLSGSDSETEGKQHGSDSFDDAFKADSLVEGTSSRYSMYNSVSQKLMAKMGFREGEGLGKYSQGRKDIVEASNQKGRRGLGLTLQGFDQELNVDWRDEPEPSACEQVSWFPECTTEIPDTQEMSDWMVVGKRKMVIEDETEFCGEELLHSVLQCKSVFDVLDGDEMRRARTRANPYEMIRGVFFLNRAAMKMANMDFVFDRMFTNPRDSCGKPLVKDREAELLYFADVCAGPGGFSEYVLWRKKWHAKGFGMTLKGPNDFKLEDFYSASSELFEPYYGEGGIDGDGDITRPENITAFRNFVLDNTDRKGVHFLMADGGFSVEGQENLQEILSKQLLLCQFLMALSVVRTGGHFICKTFDLFTPFSAGLIYLLYCCFERVCLFKPITSRPANSERYVVCKGLKVGIDDVRDYLFAVNIKLNQLHNTDSDVSLVVPLEVIKGDHEFTDYMIRSNESHCSLQIKALAKIHAFVQDTTLSEPRQAEIRKECLRLWGIPDQARVAPSSSDPKSKFFELIQGTEIDIFSYKPTLLTSKTLEKIRPVLDYRCMVSGSEQKFLIGLGKSQIYTWDGRQSDRWVKLDLKTELPRDTLLSVEIVHELKGEGKAQRKISAIHILDVLVLNGSDVREQHFNQRIQLAEKFVKAVSKPSRPDMNPIRVKEVYRLEEMEKIFVRLEMKIIKGSSGTPKLSYTGRDDRHFVPTGLYIVRTVNEPWTMGFSKSFKRKFFYNKKTKISTFDLPADSIAPFHICYYGRLFWEWGDGIRVHDSQKPQDPDKLSKEDVLSFIQTHSA.

Positions 2–19 (RRRNDPECTAPIKKQKKR) match the Bipartite nuclear localization signal motif. The interval 24–68 (ALNLSAASGDEPPSSVNHAAKASTTSLSGSDSETEGKQHGSDSFD) is disordered. Phosphoserine is present on residues Ser28, Ser31, Ser53, Ser66, and Ser91. Residues 37-54 (SSVNHAAKASTTSLSGSD) show a composition bias toward polar residues. A compositionally biased stretch (basic and acidic residues) spans 57–68 (TEGKQHGSDSFD). One can recognise a G-patch domain in the interval 87 to 133 (YNSVSQKLMAKMGFREGEGLGKYSQGRKDIVEASNQKGRRGLGLTLQ). Position 108 is an N6-acetyllysine (Lys108). Residues 203–207 (KSVFD) and Arg218 contribute to the substrate site. The RrmJ-type SAM-dependent 2'-O-MTase domain occupies 231–450 (FFLNRAAMKM…ERYVVCKGLK (220 aa)). Asn234 is a binding site for S-adenosyl-L-methionine. The active site involves Lys239. S-adenosyl-L-methionine contacts are provided by residues 277–283 (CAGPGGF) and 335–336 (DI). The active site involves Asp364. A substrate-binding site is contributed by 374–376 (NLQ). The active-site Proton acceptor is the Lys404. Asn439 lines the substrate pocket. The interval 727–835 (SSGTPKLSYT…VLSFIQTHSA (109 aa)) is interaction with POLR2A. The 35-residue stretch at 752–786 (RTVNEPWTMGFSKSFKRKFFYNKKTKISTFDLPAD) folds into the WW domain.

Interacts with POLR2A (via C-terminus).

It localises to the nucleus. The enzyme catalyses a 5'-end (N(7)-methyl 5'-triphosphoguanosine)-ribonucleoside in mRNA + S-adenosyl-L-methionine = a 5'-end (N(7)-methyl 5'-triphosphoguanosine)-(2'-O-methyl-ribonucleoside) in mRNA + S-adenosyl-L-homocysteine + H(+). S-adenosyl-L-methionine-dependent methyltransferase that mediates mRNA cap1 2'-O-ribose methylation to the 5'-cap structure of mRNAs. Methylates the ribose of the first nucleotide of a m(7)GpppG-capped mRNA and small nuclear RNA (snRNA) to produce m(7)GpppRm (cap1). Displays a preference for cap0 transcripts. Cap1 modification is linked to higher levels of translation. May be involved in the interferon response pathway. The chain is Cap-specific mRNA (nucleoside-2'-O-)-methyltransferase 1 (CMTR1) from Ailuropoda melanoleuca (Giant panda).